Here is a 1943-residue protein sequence, read N- to C-terminus: Trichohyalin (1943 aa).

The interval 1–91 (MSPLLRSICD…AQACYYALGQ (91 aa)) is S-100-like. EF-hand domains follow at residues 23 to 48 (CDGAALTKKDLKNLLEREFGAVLRRP) and 49 to 84 (HDPKTVDLILELLDLDSNGRVDFNEFLLFIFKVAQA). Residues Asp32, Asp62, Asp64, Asn66, Arg68, and Glu73 each contribute to the Ca(2+) site. 3 disordered regions span residues 110–164 (LQDR…LEQR), 186–209 (RRAEEEQLQSCKGHETEEFPDEEQ), and 222–274 (GREE…LQEE). Residues 197–209 (KGHETEEFPDEEQ) are compositionally biased toward basic and acidic residues. One copy of the 1-1; approximate repeat lies at 314–326 (RREQQEERREQQE). Positions 314 to 377 (RREQQEERRE…QEEERREQQL (64 aa)) are 5 X 13 AA tandem repeats of R-R-E-Q-E-E-E-R-R-E-Q-Q-L. The stretch at 327–339 (RREQQEERREQQL) is one 1-2; approximate repeat. The stretch at 340–351 (RREQEERREQQL) is one 1-3; approximate repeat. A run of 10 repeats spans residues 352–364 (RREQEEERREQQL), 365–377 (RREQEEERREQQL), 378–383 (RREQQL), 384–389 (RREQQL), 390–395 (RREQQL), 396–401 (RREQQL), 402–407 (RREQQL), 408–413 (RREQQL), 414–419 (RREQQL), and 420–425 (RREQQL). Residues 378 to 425 (RREQQLRREQQLRREQQLRREQQLRREQQLRREQQLRREQQLRREQQL) form an 8 X 6 AA tandem repeats of R-R-E-Q-Q-L region. The 9 X 28 AA approximate tandem repeats stretch occupies residues 425–683 (LRREQEEERH…REHEEERREQ (259 aa)). 4 disordered regions span residues 426–485 (RREQ…EERR), 509–546 (REQEERREQRLKRQEEEERLQQRLRSEQQLRREQEERR), 608–819 (ERLE…EKEQ), and 837–872 (EEQLQRRERAQQLQEEEDGLQEDQERRRSQEQRRDQ). Composition is skewed to basic and acidic residues over residues 608-684 (ERLE…REQE), 724-781 (RKQE…ERGR), 789-812 (PLREQRERQLRAEERQQREQRFLP), and 859-872 (DQERRRSQEQRRDQ). 10 tandem repeats follow at residues 906-935 (LQEEEEELQREEREKRRRQEQERQYREEEQ), 936-965 (LQQEEEQLLREEREKRRRQERERQYRKDKK), 966-995 (LQQKEEQLLGEEPEKRRRQEREKKYREEEE), 996-1025 (LQQEEEQLLREEREKRRRQEWERQYRKKDE), 1026-1055 (LQQEEEQLLREEREKRRLQERERQYREEEE), 1056-1085 (LQQEEEQLLGEERETRRRQELERQYRKEEE), 1086-1115 (LQQEEEQLLREEPEKRRRQERERQCREEEE), 1116-1145 (LQQEEEQLLREEREKRRRQELERQYREEEE), 1146-1175 (VQQEEEQLLREEPEKRRRQELERQYREEEE), and 1176-1204 (LQQEEEQLLREEQEKRRQERERQYREEEE). Positions 906 to 1204 (LQEEEEELQR…RERQYREEEE (299 aa)) are 10 X 30 AA tandem repeats. Basic and acidic residues predominate over residues 950 to 992 (KRRRQERERQYRKDKKLQQKEEQLLGEEPEKRRRQEREKKYRE). Disordered stretches follow at residues 950 to 1000 (KRRR…QQEE), 1046 to 1120 (RERQ…QQEE), 1137 to 1162 (ERQYREEEEVQQEEEQLLREEPEKRR), 1193 to 1371 (QERE…RHQE), 1404 to 1435 (REQQLRQDRDRKFREEEQQLSRQERDRKFREE), 1492 to 1691 (QQLR…ERDR), 1757 to 1820 (PERE…RDGK), 1834 to 1864 (EQRLRQERDRQYRAEEQFATQEKSRREEQEL), and 1876 to 1928 (RERK…VRSS). Over residues 1052 to 1064 (EEEELQQEEEQLL) the composition is skewed to acidic residues. Composition is skewed to basic and acidic residues over residues 1065–1085 (GEERETRRRQELERQYRKEEE) and 1092–1111 (QLLREEPEKRRRQERERQCR). The span at 1142–1151 (EEEEVQQEEE) shows a compositional bias: acidic residues. Over residues 1152-1162 (QLLREEPEKRR) the composition is skewed to basic and acidic residues. Composition is skewed to basic and acidic residues over residues 1214–1263 (YRDE…DRQS) and 1274–1371 (QQER…RHQE). The interval 1292–1894 (HFPEEEQLER…IRRQQKEEQR (603 aa)) is 23 X 26 AA approximate tandem repeats. Basic and acidic residues-rich tracts occupy residues 1492 to 1524 (QQLRRQERDRKFREQELRSQEPERKFLEEEQQL), 1533 to 1673 (FLQE…REEE), and 1682 to 1691 (QQLRRQERDR). Residues 1876–1912 (RERKLREEHIRRQQKEEQRHRQVGEIKSQEGKGHGRL) are compositionally biased toward basic and acidic residues.

It belongs to the S100-fused protein family. As to quaternary structure, monomer. Post-translationally, substrate of transglutaminase. Some 200 arginines are probably converted to citrullines by peptidylarginine deimidase. As to expression, found in the hard keratinizing tissues such as the inner root sheath (IRS) of hair follicles and medulla, and in the filiform papillae of dorsal tongue epithelium.

Its function is as follows. Intermediate filament-associated protein that associates in regular arrays with keratin intermediate filaments (KIF) of the inner root sheath cells of the hair follicle and the granular layer of the epidermis. It later becomes cross-linked to KIF by isodipeptide bonds. It may serve as scaffold protein, together with involucrin, in the organization of the cell envelope or even anchor the cell envelope to the KIF network. It may be involved in its own calcium-dependent postsynthetic processing during terminal differentiation. The chain is Trichohyalin (TCHH) from Homo sapiens (Human).